A 959-amino-acid chain; its full sequence is Kinesin-like protein NACK1 (959 aa).

The tract at residues 1–28 (MTVRTPGTPASKIDKTPATTPNGHRGRE) is disordered. The region spanning 30–353 (KIVVTVRLRP…LYFATRAKEV (324 aa)) is the Kinesin motor domain. 117 to 124 (GQTSSGKT) is an ATP binding site. A Phosphothreonine modification is found at T145. A coiled-coil region spans residues 362–429 (VVSDKQLVKH…LRRKLQEEQG (68 aa)). Disordered stretches follow at residues 417-438 (VDELRRKLQEEQGPKPSESVSP), 451-473 (SPNLEEKAPVRSERTRNTMGRQS), 598-640 (LPSN…FLKS), and 658-700 (NRAP…SVNM). 2 stretches are compositionally biased toward basic and acidic residues: residues 418 to 429 (DELRRKLQEEQG) and 454 to 466 (LEEKAPVRSERTR). A coiled-coil region spans residues 557–598 (KSVSANLKEEIARLHSQGSTIADLEEQLENVQKSLDKLVMSL). Residues 600 to 611 (SNNDQQSNNDTT) are compositionally biased toward low complexity. Over residues 613–623 (KAKHPSKKKKL) the composition is skewed to basic residues. Residues 630 to 640 (NSINRQNFLKS) are compositionally biased toward polar residues. 2 positions are modified to phosphothreonine: T675 and T690. Residues 685 to 756 (SSKEGTPYRR…EANEAAGYNL (72 aa)) are required for the binding to NPK1.

This sequence belongs to the TRAFAC class myosin-kinesin ATPase superfamily. Kinesin family. KIN-7 subfamily. As to quaternary structure, interacts (via C-terminus) with NPK1 (via C-terminus). Post-translationally, phosphorylated at Thr-145, Thr-675 and Thr-690 by CDKAs and CDKBs. The phosphorylation occurs before metaphase and inhibits the interaction with NPK1 preventing the transition to cytokinesis.

The protein localises to the cytoplasm. Its subcellular location is the nucleus. It localises to the cytoskeleton. It is found in the phragmoplast. Its function is as follows. Probable plus end-directed motor protein that functions in the NACK-PQR (NPK1-NQK1/MEK1-NRK1) MAP kinase signaling pathway, which is essential for somatic cell cytokinesis, especially for the cell-plate formation and its expansion. Regulates the activity and the localization of NPK1 by association through the non-catalytic region of the kinase. This is Kinesin-like protein NACK1 (NACK1) from Nicotiana tabacum (Common tobacco).